Here is a 206-residue protein sequence, read N- to C-terminus: Small ribosomal subunit protein uS4 (206 aa).

An S4 RNA-binding domain is found at 96-158; it reads GRLDNVVYRM…AKQQSRIKAA (63 aa).

This sequence belongs to the universal ribosomal protein uS4 family. Part of the 30S ribosomal subunit. Contacts protein S5. The interaction surface between S4 and S5 is involved in control of translational fidelity.

One of the primary rRNA binding proteins, it binds directly to 16S rRNA where it nucleates assembly of the body of the 30S subunit. Functionally, with S5 and S12 plays an important role in translational accuracy. The protein is Small ribosomal subunit protein uS4 of Vibrio atlanticus (strain LGP32) (Vibrio splendidus (strain Mel32)).